The following is a 298-amino-acid chain: 4-hydroxy-tetrahydrodipicolinate synthase (298 aa).

Position 48 (T48) interacts with pyruvate. Catalysis depends on Y137, which acts as the Proton donor/acceptor. K166 serves as the catalytic Schiff-base intermediate with substrate. I207 contributes to the pyruvate binding site.

The protein belongs to the DapA family. Homotetramer; dimer of dimers.

The protein localises to the cytoplasm. It catalyses the reaction L-aspartate 4-semialdehyde + pyruvate = (2S,4S)-4-hydroxy-2,3,4,5-tetrahydrodipicolinate + H2O + H(+). Its pathway is amino-acid biosynthesis; L-lysine biosynthesis via DAP pathway; (S)-tetrahydrodipicolinate from L-aspartate: step 3/4. Functionally, catalyzes the condensation of (S)-aspartate-beta-semialdehyde [(S)-ASA] and pyruvate to 4-hydroxy-tetrahydrodipicolinate (HTPA). The protein is 4-hydroxy-tetrahydrodipicolinate synthase of Campylobacter lari (strain RM2100 / D67 / ATCC BAA-1060).